The following is a 317-amino-acid chain: R-phycoerythrin gamma chain, chloroplastic (317 aa).

A chloroplast-targeting transit peptide spans 1-40 (MASPAFAVNGMFTPVKLSGSFTASMPVDSKPAASATGVRM). 2 residues coordinate phycourobilin: Cys-94 and Cys-133. Position 210 (Cys-210) interacts with (2R,3E)-phycoerythrobilin. A phycourobilin-binding site is contributed by Cys-297.

In terms of assembly, heteromer of 1 alpha, 1 beta and 2 gamma chains. Post-translationally, contains four covalently linked bilin chromophores.

It is found in the plastid. The protein localises to the chloroplast thylakoid membrane. Its function is as follows. Critical for the incorporation of phycoerythrin in the phycobilisome complex. In Aglaothamnion neglectum (Red alga), this protein is R-phycoerythrin gamma chain, chloroplastic.